We begin with the raw amino-acid sequence, 160 residues long: Nucleotide-binding protein CbuK_1936 (160 aa).

The protein belongs to the YajQ family.

Nucleotide-binding protein. This chain is Nucleotide-binding protein CbuK_1936, found in Coxiella burnetii (strain CbuK_Q154) (Coxiella burnetii (strain Q154)).